Here is a 79-residue protein sequence, read N- to C-terminus: Sulfur carrier protein TusA (79 aa).

The active-site Cysteine persulfide intermediate is Cys16.

This sequence belongs to the sulfur carrier protein TusA family.

The protein resides in the cytoplasm. Sulfur carrier protein which probably makes part of a sulfur-relay system. The polypeptide is Sulfur carrier protein TusA (Pseudomonas aeruginosa (strain LESB58)).